Here is a 521-residue protein sequence, read N- to C-terminus: uncharacterized protein (521 aa).

This is an uncharacterized protein from Magallana gigas (Pacific oyster).